The primary structure comprises 214 residues: Thymidylate kinase (214 aa).

11 to 18 contacts ATP; the sequence is GPEGAGKT.

This sequence belongs to the thymidylate kinase family.

It carries out the reaction dTMP + ATP = dTDP + ADP. Phosphorylation of dTMP to form dTDP in both de novo and salvage pathways of dTTP synthesis. The chain is Thymidylate kinase from Leuconostoc citreum (strain KM20).